The chain runs to 217 residues: MNQTLLSSFGTPFERVENALAALREGRGVMVLDDEDRENEGDMIFPAETMTIEQMALTIRHGSGIVCLCITEDRRKQLDLPMMVENNTSAYGTGFTVTIEAAEGVTTGVSAADRITTVRAAIADGAKPSDLNRPGHVFPLRAQAGGVLTRGGHTEATIDLMTLAGFKPAGVLCELTNDDGTMARAPECIEFANKHNMALVTIEDLVAYRQAHERKAS.

Residues arginine 37–glutamate 38, aspartate 42, arginine 150–threonine 154, and glutamate 174 each bind D-ribulose 5-phosphate. A Mg(2+)-binding site is contributed by glutamate 38. Histidine 153 contributes to the Mg(2+) binding site.

It belongs to the DHBP synthase family. In terms of assembly, homodimer. It depends on Mg(2+) as a cofactor. Requires Mn(2+) as cofactor.

The catalysed reaction is D-ribulose 5-phosphate = (2S)-2-hydroxy-3-oxobutyl phosphate + formate + H(+). The protein operates within cofactor biosynthesis; riboflavin biosynthesis; 2-hydroxy-3-oxobutyl phosphate from D-ribulose 5-phosphate: step 1/1. Functionally, catalyzes the conversion of D-ribulose 5-phosphate to formate and 3,4-dihydroxy-2-butanone 4-phosphate. This Escherichia fergusonii (strain ATCC 35469 / DSM 13698 / CCUG 18766 / IAM 14443 / JCM 21226 / LMG 7866 / NBRC 102419 / NCTC 12128 / CDC 0568-73) protein is 3,4-dihydroxy-2-butanone 4-phosphate synthase.